The chain runs to 98 residues: Small ribosomal subunit protein bS6 (98 aa).

It belongs to the bacterial ribosomal protein bS6 family.

In terms of biological role, binds together with bS18 to 16S ribosomal RNA. This Staphylococcus carnosus (strain TM300) protein is Small ribosomal subunit protein bS6.